A 1087-amino-acid polypeptide reads, in one-letter code: Transcription factor AP2-Z (1087 aa).

The segment at residues 586 to 682 (GRVYKVIVRG…IKYNSVPDSL (97 aa)) is a DNA-binding region (AP2).

The protein belongs to the AP2/ERF transcription factor family. AP2 subfamily.

The protein resides in the nucleus. Its subcellular location is the chromosome. Transcription factor which binds the 5'-[TC][AC]TG[AT]AC[AG]-3' motif. During the mosquito vector stage, plays an essential role in the zygote for de novo transcription of genes required for ookinete formation. The polypeptide is Transcription factor AP2-Z (Plasmodium berghei (strain Anka)).